We begin with the raw amino-acid sequence, 475 residues long: Aspartyl/glutamyl-tRNA(Asn/Gln) amidotransferase subunit B (475 aa).

This sequence belongs to the GatB/GatE family. GatB subfamily. In terms of assembly, heterotrimer of A, B and C subunits.

It catalyses the reaction L-glutamyl-tRNA(Gln) + L-glutamine + ATP + H2O = L-glutaminyl-tRNA(Gln) + L-glutamate + ADP + phosphate + H(+). It carries out the reaction L-aspartyl-tRNA(Asn) + L-glutamine + ATP + H2O = L-asparaginyl-tRNA(Asn) + L-glutamate + ADP + phosphate + 2 H(+). Functionally, allows the formation of correctly charged Asn-tRNA(Asn) or Gln-tRNA(Gln) through the transamidation of misacylated Asp-tRNA(Asn) or Glu-tRNA(Gln) in organisms which lack either or both of asparaginyl-tRNA or glutaminyl-tRNA synthetases. The reaction takes place in the presence of glutamine and ATP through an activated phospho-Asp-tRNA(Asn) or phospho-Glu-tRNA(Gln). The polypeptide is Aspartyl/glutamyl-tRNA(Asn/Gln) amidotransferase subunit B (Helicobacter pylori (strain HPAG1)).